A 201-amino-acid chain; its full sequence is Ribonuclease HII (201 aa).

Residues 12–201 enclose the RNase H type-2 domain; that stretch reads DLVAGVDEVG…VRELLDVPVQ (190 aa). A divalent metal cation is bound by residues Asp-18, Glu-19, and Asp-110.

The protein belongs to the RNase HII family. Mn(2+) is required as a cofactor. Mg(2+) serves as cofactor.

The protein localises to the cytoplasm. The enzyme catalyses Endonucleolytic cleavage to 5'-phosphomonoester.. Endonuclease that specifically degrades the RNA of RNA-DNA hybrids. The protein is Ribonuclease HII of Pseudomonas aeruginosa (strain UCBPP-PA14).